Here is a 250-residue protein sequence, read N- to C-terminus: Pyrroloquinoline-quinone synthase (250 aa).

The protein belongs to the PqqC family.

The enzyme catalyses 6-(2-amino-2-carboxyethyl)-7,8-dioxo-1,2,3,4,7,8-hexahydroquinoline-2,4-dicarboxylate + 3 O2 = pyrroloquinoline quinone + 2 H2O2 + 2 H2O + H(+). It participates in cofactor biosynthesis; pyrroloquinoline quinone biosynthesis. In terms of biological role, ring cyclization and eight-electron oxidation of 3a-(2-amino-2-carboxyethyl)-4,5-dioxo-4,5,6,7,8,9-hexahydroquinoline-7,9-dicarboxylic-acid to PQQ. This Pseudomonas aeruginosa (strain LESB58) protein is Pyrroloquinoline-quinone synthase.